Reading from the N-terminus, the 120-residue chain is UPF0295 protein Aflv_0370 (120 aa).

2 helical membrane passes run 12-32 (IRTFALSLIFIGFFVMYGGIF) and 42-62 (LFMILGLLFIIASTVVYFWIG).

The protein belongs to the UPF0295 family.

It localises to the cell membrane. This chain is UPF0295 protein Aflv_0370, found in Anoxybacillus flavithermus (strain DSM 21510 / WK1).